We begin with the raw amino-acid sequence, 172 residues long: Protein PLASTID REDOX INSENSITIVE 2, chloroplastic (172 aa).

A chloroplast-targeting transit peptide spans 1 to 54; that stretch reads MAARLWAAAVAPATLNPPLLTLSASSSPSSSRLRRSVLGRLRSRAPRPADFVCR.

The protein resides in the plastid. It is found in the chloroplast stroma. Its subcellular location is the chloroplast nucleoid. Its function is as follows. Required for the activity of the plastid-encoded RNA polymerase (PEP) and full expression of genes transcribed by PEP. The protein is Protein PLASTID REDOX INSENSITIVE 2, chloroplastic of Oryza sativa subsp. japonica (Rice).